A 78-amino-acid chain; its full sequence is Large ribosomal subunit protein bL28 (78 aa).

Belongs to the bacterial ribosomal protein bL28 family.

This is Large ribosomal subunit protein bL28 from Prochlorococcus marinus (strain SARG / CCMP1375 / SS120).